Consider the following 64-residue polypeptide: Large ribosomal subunit protein bL35 (64 aa).

A disordered region spans residues 1-25 (MPKMKTHRGAAKRLKKTGTGKLKRA).

This sequence belongs to the bacterial ribosomal protein bL35 family.

This chain is Large ribosomal subunit protein bL35, found in Clostridioides difficile (strain 630) (Peptoclostridium difficile).